A 184-amino-acid polypeptide reads, in one-letter code: Non-fimbrial adhesin 1 (184 aa).

The N-terminal stretch at 1–28 (MKAKKYENQIYNENGRRCQRHGRRLAIA) is a signal peptide. Cysteine 57 and cysteine 91 are joined by a disulfide.

In terms of assembly, forms a polymeric structure, which disintegrates with elevated temperature into a monomer but with some relatively stable dimers.

The chain is Non-fimbrial adhesin 1 (nfaA) from Escherichia coli.